We begin with the raw amino-acid sequence, 343 residues long: N-acetyl-gamma-glutamyl-phosphate reductase (343 aa).

Cysteine 147 is a catalytic residue.

This sequence belongs to the NAGSA dehydrogenase family. Type 1 subfamily.

Its subcellular location is the cytoplasm. The catalysed reaction is N-acetyl-L-glutamate 5-semialdehyde + phosphate + NADP(+) = N-acetyl-L-glutamyl 5-phosphate + NADPH + H(+). It participates in amino-acid biosynthesis; L-arginine biosynthesis; N(2)-acetyl-L-ornithine from L-glutamate: step 3/4. Functionally, catalyzes the NADPH-dependent reduction of N-acetyl-5-glutamyl phosphate to yield N-acetyl-L-glutamate 5-semialdehyde. The polypeptide is N-acetyl-gamma-glutamyl-phosphate reductase (Staphylococcus aureus (strain Mu3 / ATCC 700698)).